A 194-amino-acid chain; its full sequence is Fe/S biogenesis protein NfuA (194 aa).

The [4Fe-4S] cluster site is built by C152 and C155.

This sequence belongs to the NfuA family. In terms of assembly, homodimer. [4Fe-4S] cluster is required as a cofactor.

Functionally, involved in iron-sulfur cluster biogenesis. Binds a 4Fe-4S cluster, can transfer this cluster to apoproteins, and thereby intervenes in the maturation of Fe/S proteins. Could also act as a scaffold/chaperone for damaged Fe/S proteins. The chain is Fe/S biogenesis protein NfuA from Pseudomonas fluorescens (strain SBW25).